A 361-amino-acid chain; its full sequence is Palmitoyltransferase ZDHHC2 (361 aa).

Topologically, residues 1-15 (MAPSGSRSFDCWRVL) are cytoplasmic. The chain crosses the membrane as a helical span at residues 16 to 36 (YWIPVLFISLIVAWSYYAYVV). Topologically, residues 37-50 (QLCIETIENMGEKT) are lumenal. Residues 51 to 71 (VYLLIYHLLFLMFVWSYWQTI) form a helical membrane-spanning segment. Over 72 to 167 (YSKPMNPLKE…NNCVGFANYK (96 aa)) the chain is Cytoplasmic. The DHHC domain occupies 124–174 (RYCDRCLLLKPDRCHHCSACDMCILKMDHHCPWVNNCVGFANYKFFMLFLA). Residue Cys154 is the S-palmitoyl cysteine intermediate of the active site. A helical membrane pass occupies residues 168–188 (FFMLFLAYSLLYCLFVTATDM). Residues 189 to 207 (QYFIQFWTNGLPDTQAKFH) lie on the Lumenal side of the membrane. Residues 208-228 (IMFLFFAASTFSVSLAFLFAY) form a helical membrane-spanning segment. The Cytoplasmic segment spans residues 229–361 (HCWLVCKNRS…NPALTIEKET (133 aa)). A mediates localization to plasma membrane and recycling endosomes region spans residues 296–361 (NPDPEQPSIP…NPALTIEKET (66 aa)). The segment covering 299–308 (PEQPSIPPGR) has biased composition (pro residues). The tract at residues 299 to 361 (PEQPSIPPGR…NPALTIEKET (63 aa)) is disordered. A compositionally biased stretch (polar residues) spans 331 to 340 (SRLLNNGQTD). The Non-canonical dileucine endocytic signal motif lies at 333 to 334 (LL). Residues 352–355 (NPAL) carry the NPxY-like endocytic signal motif.

The protein belongs to the DHHC palmitoyltransferase family. In terms of assembly, monomer. Homodimer. The monomeric form has a higher catalytic activity. Post-translationally, autopalmitoylated.

The protein localises to the endoplasmic reticulum membrane. It localises to the golgi apparatus membrane. The protein resides in the postsynaptic density. It is found in the postsynaptic recycling endosome membrane. Its subcellular location is the cell membrane. It catalyses the reaction L-cysteinyl-[protein] + hexadecanoyl-CoA = S-hexadecanoyl-L-cysteinyl-[protein] + CoA. The catalysed reaction is L-cysteinyl-[protein] + tetradecanoyl-CoA = S-tetradecanoyl-L-cysteinyl-[protein] + CoA. The enzyme catalyses L-cysteinyl-[protein] + octadecanoyl-CoA = S-octadecanoyl-L-cysteinyl-[protein] + CoA. In terms of biological role, palmitoyltransferase that catalyzes the addition of palmitate onto various protein substrates and is involved in a variety of cellular processes. Has no stringent fatty acid selectivity and in addition to palmitate can also transfer onto target proteins myristate from tetradecanoyl-CoA and stearate from octadecanoyl-CoA. The chain is Palmitoyltransferase ZDHHC2 from Danio rerio (Zebrafish).